We begin with the raw amino-acid sequence, 468 residues long: Tyrosine-protein phosphatase YopH (468 aa).

The tract at residues 127-194 is disordered; sequence ARGHVSSHSH…TVSPYGPEAR (68 aa). Residues 130–140 are compositionally biased toward low complexity; it reads HVSSHSHSVLH. The Tyrosine-protein phosphatase domain occupies 152–461; sequence SHLDPRTPPL…DVLIKLAEGQ (310 aa). The active-site Phosphocysteine intermediate is the cysteine 403.

It belongs to the protein-tyrosine phosphatase family. Non-receptor class subfamily. As to quaternary structure, monomer.

It is found in the secreted. It carries out the reaction O-phospho-L-tyrosyl-[protein] + H2O = L-tyrosyl-[protein] + phosphate. In terms of biological role, essential virulence determinant. This protein is a protein tyrosine phosphatase. The essential function of YopH in Yersinia pathogenesis is host-protein dephosphorylation. It contributes to the ability of the bacteria to resist phagocytosis by peritoneal macrophages. The sequence is that of Tyrosine-protein phosphatase YopH (yopH) from Yersinia enterocolitica.